Reading from the N-terminus, the 286-residue chain is 4-hydroxybenzoate octaprenyltransferase (286 aa).

The next 7 membrane-spanning stretches (helical) occupy residues 21–40, 95–115, 142–162, 167–187, 210–230, 235–255, and 266–286; these read GTLL…AGGM, ILFV…NGLV, FLGI…TGEV, WWLF…YAMV, QIIG…GWSA, LYGL…MLIF, and FLNN…DYLI.

The protein belongs to the UbiA prenyltransferase family. Mg(2+) serves as cofactor.

Its subcellular location is the cell inner membrane. It catalyses the reaction all-trans-octaprenyl diphosphate + 4-hydroxybenzoate = 4-hydroxy-3-(all-trans-octaprenyl)benzoate + diphosphate. The protein operates within cofactor biosynthesis; ubiquinone biosynthesis. Its function is as follows. Catalyzes the prenylation of para-hydroxybenzoate (PHB) with an all-trans polyprenyl group. Mediates the second step in the final reaction sequence of ubiquinone-8 (UQ-8) biosynthesis, which is the condensation of the polyisoprenoid side chain with PHB, generating the first membrane-bound Q intermediate 3-octaprenyl-4-hydroxybenzoate. The protein is 4-hydroxybenzoate octaprenyltransferase of Shewanella baltica (strain OS223).